We begin with the raw amino-acid sequence, 98 residues long: C-X-C motif chemokine 10 (98 aa).

The first 21 residues, 1-21 (MNQTAILICCLIFLTLSGIQG), serve as a signal peptide directing secretion. Residue arginine 26 is modified to Citrulline; by PAD2. 2 cysteine pairs are disulfide-bonded: cysteine 30–cysteine 57 and cysteine 32–cysteine 74.

The protein belongs to the intercrine alpha (chemokine CxC) family. As to quaternary structure, monomer, dimer, and tetramer. Interacts with CXCR3 (via N-terminus). In terms of processing, several proteases can mediate post-secretion cleavages. DPP4 cleaves CXCL10 on its N-terminal 2 amino acids leading to an antagonist form of CXCL10. This dominant negative form is capable of binding CXCR3 but does not induce signaling. MMP9 cleaves 9 amino acids instead. As to expression, mainly secreted by monocytes, endothelial cells as well as fibroblasts. Expressed by epithelial cells in thymus. Microglial cells produce CXCL10 in response to viral stimulation.

It is found in the secreted. In terms of biological role, pro-inflammatory cytokine that is involved in a wide variety of processes such as chemotaxis, differentiation, and activation of peripheral immune cells, regulation of cell growth, apoptosis and modulation of angiostatic effects. Plays thereby an important role during viral infections by stimulating the activation and migration of immune cells to the infected sites. Mechanistically, binding of CXCL10 to the CXCR3 receptor activates G protein-mediated signaling and results in downstream activation of phospholipase C-dependent pathway, an increase in intracellular calcium production and actin reorganization. In turn, recruitment of activated Th1 lymphocytes occurs at sites of inflammation. Activation of the CXCL10/CXCR3 axis also plays an important role in neurons in response to brain injury for activating microglia, the resident macrophage population of the central nervous system, and directing them to the lesion site. This recruitment is an essential element for neuronal reorganization. This chain is C-X-C motif chemokine 10 (CXCL10), found in Homo sapiens (Human).